The chain runs to 209 residues: Thiamine-phosphate synthase (209 aa).

4-amino-2-methyl-5-(diphosphooxymethyl)pyrimidine-binding positions include 35–39 and asparagine 67; that span reads QYRDK. Mg(2+)-binding residues include aspartate 68 and aspartate 86. 4-amino-2-methyl-5-(diphosphooxymethyl)pyrimidine is bound at residue threonine 105. 132-134 contacts 2-[(2R,5Z)-2-carboxy-4-methylthiazol-5(2H)-ylidene]ethyl phosphate; it reads SNT. Residue lysine 135 participates in 4-amino-2-methyl-5-(diphosphooxymethyl)pyrimidine binding. Residue glycine 162 participates in 2-[(2R,5Z)-2-carboxy-4-methylthiazol-5(2H)-ylidene]ethyl phosphate binding.

Belongs to the thiamine-phosphate synthase family. The cofactor is Mg(2+).

The enzyme catalyses 2-[(2R,5Z)-2-carboxy-4-methylthiazol-5(2H)-ylidene]ethyl phosphate + 4-amino-2-methyl-5-(diphosphooxymethyl)pyrimidine + 2 H(+) = thiamine phosphate + CO2 + diphosphate. It carries out the reaction 2-(2-carboxy-4-methylthiazol-5-yl)ethyl phosphate + 4-amino-2-methyl-5-(diphosphooxymethyl)pyrimidine + 2 H(+) = thiamine phosphate + CO2 + diphosphate. The catalysed reaction is 4-methyl-5-(2-phosphooxyethyl)-thiazole + 4-amino-2-methyl-5-(diphosphooxymethyl)pyrimidine + H(+) = thiamine phosphate + diphosphate. Its pathway is cofactor biosynthesis; thiamine diphosphate biosynthesis; thiamine phosphate from 4-amino-2-methyl-5-diphosphomethylpyrimidine and 4-methyl-5-(2-phosphoethyl)-thiazole: step 1/1. Functionally, condenses 4-methyl-5-(beta-hydroxyethyl)thiazole monophosphate (THZ-P) and 2-methyl-4-amino-5-hydroxymethyl pyrimidine pyrophosphate (HMP-PP) to form thiamine monophosphate (TMP). In Pseudomonas fluorescens (strain SBW25), this protein is Thiamine-phosphate synthase.